We begin with the raw amino-acid sequence, 76 residues long: Acyl carrier protein (76 aa).

The 75-residue stretch at 1–75 (MVFEKIKALI…DIVFYITKNT (75 aa)) folds into the Carrier domain. O-(pantetheine 4'-phosphoryl)serine is present on Ser-35.

Belongs to the acyl carrier protein (ACP) family. In terms of processing, 4'-phosphopantetheine is transferred from CoA to a specific serine of apo-ACP by AcpS. This modification is essential for activity because fatty acids are bound in thioester linkage to the sulfhydryl of the prosthetic group.

Its subcellular location is the cytoplasm. It functions in the pathway lipid metabolism; fatty acid biosynthesis. Functionally, carrier of the growing fatty acid chain in fatty acid biosynthesis. This is Acyl carrier protein from Onion yellows phytoplasma (strain OY-M).